Consider the following 188-residue polypeptide: MSVLRSLLTAGVLASGLLWSLNGITATPAAQASDDRYEVTQQRNPDAACLDCHKPDTEGMHGKHASVINPNNKLPVTCTNCHGQPSPQHREGVKDVMRFNEPMYKVGEQNSVCMSCHLPEQLQKAFWPHDVHVTKVACASCHSLHPQQDTMQTLSDKGRIKICVDCHSDQRTNPNFNPASVPLLKEQP.

Residues M1 to A32 form the signal peptide. 15 residues coordinate heme: C49, C52, H53, C78, C81, H82, C113, C116, H117, C138, C141, H142, C163, C166, and H167.

Binds 5 heme groups per subunit.

Its subcellular location is the periplasm. The protein operates within energy metabolism; nitrogen metabolism. In terms of biological role, plays a role in nitrite reduction. This is Cytochrome c-type protein NrfB (nrfB) from Escherichia coli O6:H1 (strain CFT073 / ATCC 700928 / UPEC).